Reading from the N-terminus, the 129-residue chain is Small ribosomal subunit protein uS9 (129 aa).

The segment at 107-129 (SRVVERKKPGKKKARRSPQFSKR) is disordered. Basic residues predominate over residues 114–129 (KPGKKKARRSPQFSKR).

This sequence belongs to the universal ribosomal protein uS9 family.

This is Small ribosomal subunit protein uS9 from Sulfurovum sp. (strain NBC37-1).